A 556-amino-acid chain; its full sequence is U3 small nucleolar RNA-associated protein 18 homolog (556 aa).

A compositionally biased stretch (basic residues) spans 1 to 24; the sequence is MPPERRRRMKLDRRTGAKPKRKPG. Residues 1 to 70 are disordered; the sequence is MPPERRRRMK…IAVAAAEEER (70 aa). The span at 43–65 shows a compositional bias: low complexity; the sequence is APSSQRKPPARPSAAAAAIAVAA. A Glycyl lysine isopeptide (Lys-Gly) (interchain with G-Cter in SUMO2) cross-link involves residue Lys84. Residues 111-143 are disordered; it reads RGPRVQEHEDSGDSEVENEAKGNFPPQKKPVWV. Phosphoserine is present on residues Ser121 and Ser124. Residues Lys183 and Lys201 each participate in a glycyl lysine isopeptide (Lys-Gly) (interchain with G-Cter in SUMO2) cross-link. The segment at 193–219 is disordered; sequence VPAWAETTKRKTSSDDESEEDEDDLLQ. Thr204 is modified (phosphothreonine). A phosphoserine mark is found at Ser205, Ser206, and Ser210. Positions 207–216 are enriched in acidic residues; it reads DDESEEDEDD. Thr221 is modified (phosphothreonine). 6 WD repeats span residues 249 to 288, 293 to 333, 339 to 380, 381 to 419, 421 to 462, and 471 to 512; these read PTVARISSVQFHPGAQIVMVAGLDNAVSLFQVDGKTNPKI, LERF…LIPV, LKEK…GSMK, INGRVAASTFSSDSKKVYASSGDGEVYVWDVNSRKCLNR, VDEG…QETN, and NLVT…VFSN. Lys517 is covalently cross-linked (Glycyl lysine isopeptide (Lys-Gly) (interchain with G-Cter in SUMO2)).

This sequence belongs to the WD repeat UTP18 family. Part of the small subunit (SSU) processome, composed of more than 70 proteins and the RNA chaperone small nucleolar RNA (snoRNA) U3.

Its subcellular location is the nucleus. The protein resides in the nucleolus. Its function is as follows. Part of the small subunit (SSU) processome, first precursor of the small eukaryotic ribosomal subunit. During the assembly of the SSU processome in the nucleolus, many ribosome biogenesis factors, an RNA chaperone and ribosomal proteins associate with the nascent pre-rRNA and work in concert to generate RNA folding, modifications, rearrangements and cleavage as well as targeted degradation of pre-ribosomal RNA by the RNA exosome. Involved in nucleolar processing of pre-18S ribosomal RNA. This is U3 small nucleolar RNA-associated protein 18 homolog from Homo sapiens (Human).